The sequence spans 203 residues: MHKAPESVLNALVPMVVEQTAKGERSYDIYSRLLKERVIFLVGQVEEHMANLIVAQLLFLESESPDKDIYLYINSPGGSVTAGMAIYDTMQFIKPNVSTVCIGQAASMGAFLLAGGAEGKRHCLPNSRVMIHQPLGGFQGQASDIAIHAQEILGIKNKLNTMLAEHTGQPIEVIERDTDRDNFMSADEAAEYGLVDSVLAKRG.

Ser-107 serves as the catalytic Nucleophile. The active site involves His-132.

It belongs to the peptidase S14 family. As to quaternary structure, fourteen ClpP subunits assemble into 2 heptameric rings which stack back to back to give a disk-like structure with a central cavity, resembling the structure of eukaryotic proteasomes.

It localises to the cytoplasm. It catalyses the reaction Hydrolysis of proteins to small peptides in the presence of ATP and magnesium. alpha-casein is the usual test substrate. In the absence of ATP, only oligopeptides shorter than five residues are hydrolyzed (such as succinyl-Leu-Tyr-|-NHMec, and Leu-Tyr-Leu-|-Tyr-Trp, in which cleavage of the -Tyr-|-Leu- and -Tyr-|-Trp bonds also occurs).. Its function is as follows. Cleaves peptides in various proteins in a process that requires ATP hydrolysis. Has a chymotrypsin-like activity. Plays a major role in the degradation of misfolded proteins. This chain is ATP-dependent Clp protease proteolytic subunit, found in Shewanella piezotolerans (strain WP3 / JCM 13877).